The sequence spans 59 residues: Large ribosomal subunit protein uL30 (59 aa).

This sequence belongs to the universal ribosomal protein uL30 family. As to quaternary structure, part of the 50S ribosomal subunit.

This Sulfurihydrogenibium sp. (strain YO3AOP1) protein is Large ribosomal subunit protein uL30.